The following is a 631-amino-acid chain: uncharacterized protein (631 aa).

Positions 1–20 are cleaved as a signal peptide; it reads MVRFVSILSLFGCAATLVTA. Residues 21–105 are Lumenal-facing; that stretch reads HDDMDMDMDM…AGNRSALRYH (85 aa). N-linked (GlcNAc...) asparagine glycosylation is found at N87 and N98. The chain crosses the membrane as a helical span at residues 106 to 126; the sequence is IITLLLVAFVLYPVSLALSAA. The Cytoplasmic segment spans residues 127-131; the sequence is RSRWY. A helical membrane pass occupies residues 132–152; it reads LPLLFVNLCICISSVMALSVF. At 153–170 the chain is on the lumenal side; that stretch reads KNTFPEEDWYAHNIYGTT. Residues 171–191 traverse the membrane as a helical segment; it reads SVLLLVFMLVHFFAAVLSVPV. Topologically, residues 192–322 are cytoplasmic; that stretch reads SLASKKEYRP…LSCVANVVFH (131 aa). Residues 216-274 form a disordered region; it reads MVNSARGSPSPSSNRDTLFSLSSDTTTATATNNNKRRRAEGEDEGDNTSNHDTLRDEDY. S219 is modified (phosphoserine). Positions 220–239 are enriched in polar residues; it reads ARGSPSPSSNRDTLFSLSSD. K250 is covalently cross-linked (Glycyl lysine isopeptide (Lys-Gly) (interchain with G-Cter in ubiquitin)). Residues 323–343 traverse the membrane as a helical segment; sequence MLTYPLFMYIFVDLIIGFAVG. Over 344–351 the chain is Lumenal; sequence NLLGKGIR. Residues 352–372 form a helical membrane-spanning segment; sequence IFNLLAHWIKGGVFFTLGVVS. Residues 373-407 lie on the Cytoplasmic side of the membrane; sequence LARYCGFAAKYGWAWNNISFTSQLTQTRSSNLLFR. The chain crosses the membrane as a helical span at residues 408–428; it reads FAPAGTFTMEFVESFLIFFYG. At 429-451 the chain is on the lumenal side; that stretch reads STNIFLEHLAGNGGAWTAKDLQH. The chain crosses the membrane as a helical span at residues 452–472; the sequence is VSIAFMFIGTGLCGLLTEYKL. The Cytoplasmic segment spans residues 473 to 529; the sequence is NHWRFEHARKRPQTDVVAATPGYSPNPFPAFTIFWTGILMSQHAQSSQFSTTIHTQW. The helical transmembrane segment at 530 to 550 threads the bilayer; it reads GYLLSYGSFFRLLTFLILFLV. The Lumenal segment spans residues 551-598; it reads PNTNSAASKPFTELITSFCLLCGGLVFMESTDQSIEAMEYRGFTPMFT. A helical membrane pass occupies residues 599–619; sequence FNLSVGFVSLLMAWEMILFIW. The Cytoplasmic portion of the chain corresponds to 620 to 631; sequence KDWLIKTRKTSL.

It to S.pombe SpBC3B8.06.

It is found in the membrane. This is an uncharacterized protein from Saccharomyces cerevisiae (strain ATCC 204508 / S288c) (Baker's yeast).